The sequence spans 101 residues: Thylakoid-associated protein slr0729 (101 aa).

It localises to the cellular thylakoid membrane. The sequence is that of Thylakoid-associated protein slr0729 from Synechocystis sp. (strain ATCC 27184 / PCC 6803 / Kazusa).